Consider the following 110-residue polypeptide: Cell cycle protein GpsB (110 aa).

Positions 37–63 (KDYTVYIALVKELQEENAKLKAKATSA) form a coiled coil. The disordered stretch occupies residues 59-79 (KATSAPASRPAYASATSEPSH). The segment covering 60–75 (ATSAPASRPAYASATS) has biased composition (low complexity).

The protein belongs to the GpsB family. Forms polymers through the coiled coil domains. Interacts with PBP1, MreC and EzrA.

The protein localises to the cytoplasm. Divisome component that associates with the complex late in its assembly, after the Z-ring is formed, and is dependent on DivIC and PBP2B for its recruitment to the divisome. Together with EzrA, is a key component of the system that regulates PBP1 localization during cell cycle progression. Its main role could be the removal of PBP1 from the cell pole after pole maturation is completed. Also contributes to the recruitment of PBP1 to the division complex. Not essential for septum formation. The protein is Cell cycle protein GpsB of Streptococcus thermophilus (strain CNRZ 1066).